The primary structure comprises 345 residues: Fructose-1,6-bisphosphatase class 1 (345 aa).

E90, D109, L111, and D112 together coordinate Mg(2+). Substrate contacts are provided by residues 112–115 (DGSS) and N200. E272 serves as a coordination point for Mg(2+).

Belongs to the FBPase class 1 family. In terms of assembly, homotetramer. Mg(2+) is required as a cofactor.

Its subcellular location is the cytoplasm. The catalysed reaction is beta-D-fructose 1,6-bisphosphate + H2O = beta-D-fructose 6-phosphate + phosphate. Its pathway is carbohydrate biosynthesis; gluconeogenesis. The protein is Fructose-1,6-bisphosphatase class 1 of Bradyrhizobium diazoefficiens (strain JCM 10833 / BCRC 13528 / IAM 13628 / NBRC 14792 / USDA 110).